Consider the following 332-residue polypeptide: Biotin synthase (332 aa).

One can recognise a Radical SAM core domain in the interval 51 to 279; sequence YKVQLASLLS…LSRVRLSAGR (229 aa). The [4Fe-4S] cluster site is built by C66, C70, and C73. [2Fe-2S] cluster-binding residues include C110, C142, C202, and R274.

It belongs to the radical SAM superfamily. Biotin synthase family. As to quaternary structure, homodimer. The cofactor is [4Fe-4S] cluster. Requires [2Fe-2S] cluster as cofactor.

It catalyses the reaction (4R,5S)-dethiobiotin + (sulfur carrier)-SH + 2 reduced [2Fe-2S]-[ferredoxin] + 2 S-adenosyl-L-methionine = (sulfur carrier)-H + biotin + 2 5'-deoxyadenosine + 2 L-methionine + 2 oxidized [2Fe-2S]-[ferredoxin]. It functions in the pathway cofactor biosynthesis; biotin biosynthesis; biotin from 7,8-diaminononanoate: step 2/2. Catalyzes the conversion of dethiobiotin (DTB) to biotin by the insertion of a sulfur atom into dethiobiotin via a radical-based mechanism. This chain is Biotin synthase, found in Prochlorococcus marinus (strain MIT 9211).